The sequence spans 222 residues: Putative germin-like protein subfamily 1 member 9 (222 aa).

The first 22 residues, 1 to 22 (MKSFSFLAVLSILAITLSLSKA), serve as a signal peptide directing secretion. An intrachain disulfide couples C32 to C49. One can recognise a Cupin type-1 domain in the interval 63-213 (TGLHEARPPN…AFQVDPKIVM (151 aa)). N78 carries N-linked (GlcNAc...) asparagine glycosylation. Residues H111, H113, E118, and H159 each coordinate Mn(2+).

Belongs to the germin family. In terms of assembly, oligomer (believed to be a pentamer but probably hexamer).

It localises to the secreted. It is found in the extracellular space. The protein localises to the apoplast. Its function is as follows. May play a role in plant defense. Probably has no oxalate oxidase activity even if the active site is conserved. This Arabidopsis thaliana (Mouse-ear cress) protein is Putative germin-like protein subfamily 1 member 9.